We begin with the raw amino-acid sequence, 328 residues long: Fructose-1,6-bisphosphatase class 1 (328 aa).

Mg(2+) contacts are provided by Glu91, Asp110, Leu112, and Asp113. Residues 113-116 (DGSS), Asn205, and 257-259 (YLY) each bind substrate. Glu277 provides a ligand contact to Mg(2+).

The protein belongs to the FBPase class 1 family. As to quaternary structure, homotetramer. Mg(2+) serves as cofactor.

It localises to the cytoplasm. The catalysed reaction is beta-D-fructose 1,6-bisphosphate + H2O = beta-D-fructose 6-phosphate + phosphate. Its pathway is carbohydrate biosynthesis; gluconeogenesis. The chain is Fructose-1,6-bisphosphatase class 1 from Azorhizobium caulinodans (strain ATCC 43989 / DSM 5975 / JCM 20966 / LMG 6465 / NBRC 14845 / NCIMB 13405 / ORS 571).